The sequence spans 213 residues: MSKDSDYKRAEKHLSSIDNKWSSLVKKVGPCTLTPHPEHAPYEGIIRAITSQKLSDAATNSIINKFCTQCSDNDEFPTPKQIMETDVETLHECGFSKLKSQEIHIVAEAALNKQIPSKSEIEKMSEEELMESLSKIKGVKRWTIEMYSIFTLGRLDIMPADDSTLKNEAKEFFGLSSKPQTEEVEKLTKPCKPYRTIAAWYLWQIPKLHRKGQ.

15 residues coordinate DNA: K53, L54, S61, H91, G94, S96, K97, K99, E102, K137, G138, K140, T143, S163, and T164.

The protein belongs to the alkylbase DNA glycosidase AlkA family.

It is found in the nucleus. Its function is as follows. Alkylbase DNA glycosidase-like protein that shows no DNA glycosylase activity for alkylated bases. The molecular role of mag2 appears to be abasic (AP) site recognition and protection, while possibly facilitating damage signaling by structurally sculpting the DNA substrate. Stimulates AP site binding to mismatch repair protein mutS. This chain is Alkylbase DNA glycosidase-like protein mag2, found in Schizosaccharomyces pombe (strain 972 / ATCC 24843) (Fission yeast).